Here is a 228-residue protein sequence, read N- to C-terminus: Geranylgeranylglyceryl phosphate synthase (228 aa).

Position 13 (K13) interacts with sn-glycerol 1-phosphate. Residues D15 and T41 each contribute to the Mg(2+) site. Sn-glycerol 1-phosphate-binding positions include 159–164, G189, and 209–210; these read YIEYSG and GN.

It belongs to the GGGP/HepGP synthase family. Group I subfamily. Requires Mg(2+) as cofactor.

Its subcellular location is the cytoplasm. The enzyme catalyses sn-glycerol 1-phosphate + (2E,6E,10E)-geranylgeranyl diphosphate = sn-3-O-(geranylgeranyl)glycerol 1-phosphate + diphosphate. It participates in membrane lipid metabolism; glycerophospholipid metabolism. In terms of biological role, prenyltransferase that catalyzes the transfer of the geranylgeranyl moiety of geranylgeranyl diphosphate (GGPP) to the C3 hydroxyl of sn-glycerol-1-phosphate (G1P). This reaction is the first ether-bond-formation step in the biosynthesis of archaeal membrane lipids. The sequence is that of Geranylgeranylglyceryl phosphate synthase from Methanospirillum hungatei JF-1 (strain ATCC 27890 / DSM 864 / NBRC 100397 / JF-1).